The primary structure comprises 474 residues: F420-non-reducing hydrogenase vhc subunit A (474 aa).

Ni(2+) contacts are provided by C61, C64, C445, and C448.

The protein belongs to the [NiFe]/[NiFeSe] hydrogenase large subunit family. As to quaternary structure, the F420-non-reducing hydrogenase vhc is composed of three subunits; VhcA, VhcD and VhcG. The cofactor is Ni(2+).

This Methanococcus voltae protein is F420-non-reducing hydrogenase vhc subunit A (vhcA).